A 342-amino-acid chain; its full sequence is Lumican (342 aa).

The signal sequence occupies residues 1-18; it reads MNLGVFPLLLALIGGASS. Sulfotyrosine occurs at positions 20, 23, and 34. The LRRNT domain maps to 32 to 70; that stretch reads ALYGRSSPNCAPECNCPESYPSAMYCDELKLKSVPMVPP. 8 LRR repeats span residues 71 to 92, 95 to 118, 121 to 141, 142 to 163, 164 to 185, 189 to 209, 210 to 231, and 234 to 254; these read GIKY…AFEN, DLQW…VFSK, QLKK…PLPK, SLVD…DGLV, NLTF…AALK, SLEY…GLPV, SLLT…YFKR, and ALQY…PGNS. N92 is a glycosylation site (N-linked (GlcNAc...) (keratan sulfate) asparagine). Residue N131 is glycosylated (N-linked (GlcNAc...) (keratan sulfate) asparagine). N-linked (GlcNAc...) (keratan sulfate) asparagine glycosylation is present at N164. An N-linked (GlcNAc...) (keratan sulfate) asparagine glycan is attached at N256. LRR repeat units lie at residues 259–280 and 281–300; these read SLLE…NENL and ENYY…SFCK. The cysteines at positions 299 and 332 are disulfide-linked. Phosphoserine is present on S308. The stretch at 309–330 is one LRR 11 repeat; the sequence is KIKHLRLDGNHITQTSLPPDMY.

It belongs to the small leucine-rich proteoglycan (SLRP) family. SLRP class II subfamily. Binds to laminin. Post-translationally, sulfated on tyrosine residue(s). Contains keratan sulfate. In terms of tissue distribution, cornea and other tissues.

Its subcellular location is the secreted. It localises to the extracellular space. The protein resides in the extracellular matrix. The protein is Lumican (LUM) of Bos taurus (Bovine).